Consider the following 724-residue polypeptide: Aquaglyceroporin-4 (724 aa).

Disordered stretches follow at residues 1–167 (MADE…SIRR), 248–267 (INMAQQQQQQQQQQPQNQAD), and 302–396 (AHGL…DLDG). Residues 1-434 (MADEEIKPTS…VIRLRFREPL (434 aa)) lie on the Cytoplasmic side of the membrane. Polar residues predominate over residues 87–96 (LTGQVPQDND). The segment covering 252–265 (QQQQQQQQQQPQNQ) has biased composition (low complexity). Composition is skewed to polar residues over residues 307–325 (SPTNLQTTASRQEPLTAPS) and 360–370 (PSQTSQNSQNE). A helical transmembrane segment spans residues 435–455 (AELLAVTCQLTLGFCADLVVV). Residues 456–472 (TSGKNASPAGNEATTDW) lie on the Extracellular side of the membrane. Residues 473–493 (AWGLASMLGIYIAGGISGAHL) form a helical membrane-spanning segment. The NPA 1 signature appears at 494–496 (NPA). Topologically, residues 494–513 (NPAISIMLWIYRGFPLRKVP) are cytoplasmic. A helical membrane pass occupies residues 514 to 534 (MYVLAQILGAFIAALISFGLY). Residues 535–567 (QTNIVEYGGTDLKTSDTMGAFITYPRYPWINAS) lie on the Extracellular side of the membrane. N565 is a glycosylation site (N-linked (GlcNAc...) asparagine). Residues 568–588 (TSFFTEFVGTAILAVAVLALG) form a helical membrane-spanning segment. The Cytoplasmic portion of the chain corresponds to 589–595 (DDMNAPP). The chain crosses the membrane as a helical span at residues 596–616 (GAGMSAFILGLVITVLSMAFG). Residues 617–647 (YNTGAALNPSRDLGPRLALAALGYGKDLFTD) are Extracellular-facing. The NPA 2 motif lies at 624 to 626 (NPS). The chain crosses the membrane as a helical span at residues 648–668 (VYWIWGNWCAPILGAIFGAFL). The Cytoplasmic portion of the chain corresponds to 669-724 (YDAAIFAGGESPVNYPRKRIKRAGHKWRKKWGVRLRKMKPAKKGEDEAYRRWKESQ).

The protein belongs to the MIP/aquaporin (TC 1.A.8) family.

It localises to the membrane. It catalyses the reaction H2O(in) = H2O(out). The enzyme catalyses glycerol(in) = glycerol(out). Functionally, water channel required to facilitate the transport of water across membranes. May play a role in the vegetative growth. The chain is Aquaglyceroporin-4 from Botryotinia fuckeliana (strain B05.10) (Noble rot fungus).